We begin with the raw amino-acid sequence, 473 residues long: Mogroside IIIx synthase (473 aa).

The Proton acceptor role is filled by H43. The active-site Charge relay is the D142. S293, Q356, W374, N375, S376, E379, D395, and Q396 together coordinate UDP-alpha-D-glucose.

This sequence belongs to the UDP-glycosyltransferase family. Highly expressed in mature fruits.

The enzyme catalyses mogroside IIE + UDP-alpha-D-glucose = mogroside IIIX + UDP + H(+). The catalysed reaction is mogroside III + UDP-alpha-D-glucose = mogroside IV + UDP + H(+). It carries out the reaction mogroside III + UDP-alpha-D-glucose = siamenoside I + UDP + H(+). It catalyses the reaction mogroside IIIX + UDP-alpha-D-glucose = mogroside IVA + UDP + H(+). The enzyme catalyses mogroside IIIX + UDP-alpha-D-glucose = siamenoside I + UDP + H(+). The catalysed reaction is mogroside IV + UDP-alpha-D-glucose = mogroside V + UDP + H(+). It carries out the reaction siamenoside I + UDP-alpha-D-glucose = mogroside V + UDP + H(+). It catalyses the reaction mogroside V + UDP-alpha-D-glucose = mogroside VI + UDP + H(+). Its pathway is secondary metabolite biosynthesis; terpenoid biosynthesis. Its activity is regulated as follows. Activity is increased by Mg(2+). Functionally, UDP-glycosyltransferase involved in the biosynthesis of cucurbitacin and mogroside tetracyclic triterpene natural products (e.g. siamenoside I and mogrosides IV, V and VI). Cucurbitacins have cytotoxic properties and exhibit deterrent taste as a defense barrier against herbivores. Mogrosides are nonsugar highly oxygenated compounds used as high-intensity zero-calorie sweeteners; they also possess pharmacological properties such as regulating immunity, lowering blood sugar and lipid levels, protecting the liver, and acting as antioxidants and antitumor agents. Its function is as follows. Catalyzes the branched glucosylations of mogroside II-E, mogroside III, mogroside IIIx, mogroside IV, mogroside IV-A, siamenoside I and mogroside V, ending in the production of mogroside VI. Catalyzes the beta(1-6) branched glucosylations of mogroside II-E to produce mogroside IIIx by forming a beta(1-6) glycosidic bond with the 6-hydroxyl of glucose 1-C24; a subsequent glycosylation at glucose 1-C3 leads to the formation of mogroside IV-A with beta(1-6) glycosidic bond. Can also use mogroside III-E, mogroside III-A, mogroside IV-E and mogroside IV-A as substrates. The chain is Mogroside IIIx synthase from Siraitia grosvenorii (Monk's fruit).